The sequence spans 199 residues: Small ribosomal subunit protein uS4 (199 aa).

Residues 91-151 (SRLDNLVYRF…EKSKNVKAIA (61 aa)) form the S4 RNA-binding domain.

The protein belongs to the universal ribosomal protein uS4 family. As to quaternary structure, part of the 30S ribosomal subunit. Contacts protein S5. The interaction surface between S4 and S5 is involved in control of translational fidelity.

In terms of biological role, one of the primary rRNA binding proteins, it binds directly to 16S rRNA where it nucleates assembly of the body of the 30S subunit. Functionally, with S5 and S12 plays an important role in translational accuracy. This Exiguobacterium sp. (strain ATCC BAA-1283 / AT1b) protein is Small ribosomal subunit protein uS4.